A 137-amino-acid polypeptide reads, in one-letter code: Small ribosomal subunit protein uS9 (137 aa).

The protein belongs to the universal ribosomal protein uS9 family.

The sequence is that of Small ribosomal subunit protein uS9 (rps9) from Sulfurisphaera tokodaii (strain DSM 16993 / JCM 10545 / NBRC 100140 / 7) (Sulfolobus tokodaii).